Here is a 206-residue protein sequence, read N- to C-terminus: Macrophage immunometabolism regulator (206 aa).

Position 1 is an N-acetylmethionine (methionine 1). The tract at residues 1 to 41 (MEVDINGESRSTLTTLPFPGAEANSPGKAEAEKPRCSSTPC) is disordered. 3 positions are modified to phosphoserine: serine 25, serine 140, and serine 167.

This sequence belongs to the UNC119-binding protein family. Interacts with UNC119 and UNC119B; interaction preferentially takes place when UNC119 and UNC119B are unliganded with myristoylated proteins. Post-translationally, phosphorylated. In terms of tissue distribution, high expression in normal macrophages, monocytes, and cultured rheumatoid arthritis synovial fibroblasts (RASFs), with lower expression in B- and T-cells, and little to no expression in other tissues and cell lines.

It localises to the cytoplasm. The protein localises to the cell projection. The protein resides in the cilium. Its function is as follows. Regulates the macrophage function, by enhancing the resolution of inflammation and wound repair functions mediated by M2 macrophages. The regulation of macrophage function is, due at least in part, to its ability to inhibit glycolysis. May also play a role in trafficking of proteins via its interaction with UNC119 and UNC119B cargo adapters: may help the release of UNC119 and UNC119B cargo or the recycling of UNC119 and UNC119B. May play a role in ciliary membrane localization via its interaction with UNC119B and protein transport into photoreceptor cells. In Homo sapiens (Human), this protein is Macrophage immunometabolism regulator.